Consider the following 436-residue polypeptide: Putative ankyrin repeat protein FPV026 (436 aa).

ANK repeat units follow at residues 63–92 (EGIR…NVNE), 101–130 (TCYS…DVNN), 135–164 (LRNT…DQNI), 168–197 (NGNI…NLEI), 201–230 (NGRT…LVDS), and 234–266 (EGYT…FLNI). Residues 409–436 (TSTITNLPYEVIYIIVEKMTNKELCEIR) form the F-box domain.

In Fowlpox virus (strain NVSL) (FPV), this protein is Putative ankyrin repeat protein FPV026.